We begin with the raw amino-acid sequence, 179 residues long: Beta-defensin 22 (179 aa).

The signal sequence occupies residues 1 to 20 (MKSLLSTLVIIMFLAHLVTG). 3 disulfide bridges follow: C27–C58, C34–C52, and C38–C59. Positions 105-150 (GTPTKTSAPAKTSAPAKTSTTTKASNAAKASTTTKASNAAKASAAT) are enriched in low complexity. The disordered stretch occupies residues 105–152 (GTPTKTSAPAKTSAPAKTSTTTKASNAAKASTTTKASNAAKASAATMA).

The protein belongs to the beta-defensin family. Post-translationally, O-glycosylated; glycans contain alpha(2,3)-linked sialic acids. Specifically expressed in corpus epididymis and cauda epididymis with expression in corpus being highest (at protein level). Not detected in other tissues tested, including testis, prostate, seminal vesicle and vas deferens (at protein level).

It localises to the cytoplasmic vesicle. The protein localises to the secretory vesicle. It is found in the acrosome. The protein resides in the secreted. Its subcellular location is the extracellular space. In terms of biological role, probable component of sperm glycocalyx. Likely protects and facilitates transport of sperm in the female reproductive tract. Probably released from the sperm surface during capacitation. This chain is Beta-defensin 22, found in Mus musculus (Mouse).